The sequence spans 346 residues: Protein RecA (346 aa).

ATP is bound at residue 67–74; the sequence is GPESSGKT.

The protein belongs to the RecA family.

The protein localises to the cytoplasm. Can catalyze the hydrolysis of ATP in the presence of single-stranded DNA, the ATP-dependent uptake of single-stranded DNA by duplex DNA, and the ATP-dependent hybridization of homologous single-stranded DNAs. It interacts with LexA causing its activation and leading to its autocatalytic cleavage. This Frankia alni (strain DSM 45986 / CECT 9034 / ACN14a) protein is Protein RecA.